Reading from the N-terminus, the 117-residue chain is Ribonuclease P protein component (117 aa).

This sequence belongs to the RnpA family. As to quaternary structure, consists of a catalytic RNA component (M1 or rnpB) and a protein subunit.

The enzyme catalyses Endonucleolytic cleavage of RNA, removing 5'-extranucleotides from tRNA precursor.. In terms of biological role, RNaseP catalyzes the removal of the 5'-leader sequence from pre-tRNA to produce the mature 5'-terminus. It can also cleave other RNA substrates such as 4.5S RNA. The protein component plays an auxiliary but essential role in vivo by binding to the 5'-leader sequence and broadening the substrate specificity of the ribozyme. The sequence is that of Ribonuclease P protein component from Aliivibrio fischeri (strain ATCC 700601 / ES114) (Vibrio fischeri).